A 240-amino-acid polypeptide reads, in one-letter code: Cysteine-rich venom protein catrin (240 aa).

Positions 1 to 19 (MIAFIVLPILAAVLQQSSG) are cleaved as a signal peptide. The SCP domain occupies 38–166 (VDLHNFLRRS…KYSYFYVCQY (129 aa)). Intrachain disulfides connect C75–C153, C92–C167, C148–C164, C186–C193, C189–C198, C202–C235, C211–C229, and C220–C233. The region spanning 202 to 235 (CTKEDKYTNCKSLVQQAGCQDKQMQSDCPAICFC) is the ShKT domain.

This sequence belongs to the CRISP family. In terms of tissue distribution, expressed by the venom gland.

The protein localises to the secreted. Its function is as follows. Catrin-2 weakly blocks contraction of smooth muscle elicited by high potassium-induced depolarization, but does not block caffeine-stimulated contraction. Catrin-1 has no significant effect. May target voltage-gated calcium channels on smooth muscle. The chain is Cysteine-rich venom protein catrin from Crotalus atrox (Western diamondback rattlesnake).